A 461-amino-acid chain; its full sequence is Fumarate hydratase class II (461 aa).

Substrate is bound by residues 97–99 (SGT), 127–130 (HPND), 137–139 (SSN), and Thr-185. His-186 (proton donor/acceptor) is an active-site residue. Residue Ser-316 is part of the active site. Substrate-binding positions include Ser-317 and 322–324 (KVN).

This sequence belongs to the class-II fumarase/aspartase family. Fumarase subfamily. In terms of assembly, homotetramer.

The protein resides in the cytoplasm. It catalyses the reaction (S)-malate = fumarate + H2O. The protein operates within carbohydrate metabolism; tricarboxylic acid cycle; (S)-malate from fumarate: step 1/1. In terms of biological role, involved in the TCA cycle. Catalyzes the stereospecific interconversion of fumarate to L-malate. The polypeptide is Fumarate hydratase class II (Staphylococcus epidermidis (strain ATCC 35984 / DSM 28319 / BCRC 17069 / CCUG 31568 / BM 3577 / RP62A)).